We begin with the raw amino-acid sequence, 153 residues long: Endoribonuclease YbeY (153 aa).

Zn(2+)-binding residues include histidine 113, histidine 117, and histidine 123.

This sequence belongs to the endoribonuclease YbeY family. Requires Zn(2+) as cofactor.

The protein localises to the cytoplasm. In terms of biological role, single strand-specific metallo-endoribonuclease involved in late-stage 70S ribosome quality control and in maturation of the 3' terminus of the 16S rRNA. In Aliivibrio fischeri (strain ATCC 700601 / ES114) (Vibrio fischeri), this protein is Endoribonuclease YbeY.